Consider the following 509-residue polypeptide: Kelch repeat protein M-T9 (509 aa).

The BTB domain occupies 15–79; sequence SDVTVVAGDS…MYAGCDGLND (65 aa). Kelch repeat units lie at residues 274-320, 321-368, 370-415, 416-463, and 465-509; these read VLYC…IVNG, YIYV…YRNE, WIVG…VYNN, RLYC…VYNK, and IYVL…NDEI.

The protein belongs to the poxviruses Kelch family.

This Myxoma virus (strain Lausanne) (MYXV) protein is Kelch repeat protein M-T9.